The chain runs to 341 residues: Ribulose-5-phosphate reductase 2 (341 aa).

Residues cysteine 38, histidine 64, glutamate 65, and glutamate 144 each contribute to the Zn(2+) site.

The protein belongs to the zinc-containing alcohol dehydrogenase family. In terms of assembly, heterodimer together with TarI. It depends on Zn(2+) as a cofactor.

The catalysed reaction is D-ribitol 5-phosphate + NADP(+) = D-ribulose 5-phosphate + NADPH + H(+). It participates in cell wall biogenesis; poly(ribitol phosphate) teichoic acid biosynthesis. Functionally, catalyzes the NADPH dependent reduction of D-ribulose 5-phosphate to D-ribitol 5-phosphate. The protein is Ribulose-5-phosphate reductase 2 of Staphylococcus aureus (strain NCTC 8325 / PS 47).